The following is a 156-amino-acid chain: Cyclic pyranopterin monophosphate synthase (156 aa).

Substrate-binding positions include 75-77 (LCH) and 111-112 (ME). The active site involves Asp126.

The protein belongs to the MoaC family. In terms of assembly, homohexamer; trimer of dimers.

It catalyses the reaction (8S)-3',8-cyclo-7,8-dihydroguanosine 5'-triphosphate = cyclic pyranopterin phosphate + diphosphate. The protein operates within cofactor biosynthesis; molybdopterin biosynthesis. In terms of biological role, catalyzes the conversion of (8S)-3',8-cyclo-7,8-dihydroguanosine 5'-triphosphate to cyclic pyranopterin monophosphate (cPMP). The polypeptide is Cyclic pyranopterin monophosphate synthase (Corynebacterium glutamicum (strain ATCC 13032 / DSM 20300 / JCM 1318 / BCRC 11384 / CCUG 27702 / LMG 3730 / NBRC 12168 / NCIMB 10025 / NRRL B-2784 / 534)).